Consider the following 290-residue polypeptide: Transposon Ty3-G Gag polyprotein (290 aa).

An N-acetylserine modification is found at Ser2. The CCHC-type zinc finger occupies Arg265–Ala282.

It localises to the cytoplasm. Capsid protein (CA) is the structural component of the virus-like particle (VLP), forming the shell that encapsulates the retrotransposons dimeric RNA genome. In terms of biological role, nucleocapsid protein p9 (NC) forms the nucleocore that coats the retro-elements dimeric RNA. Binds these RNAs through its zinc fingers. Promotes primer tRNA(i)-Met annealing to the multipartite primer-binding site (PBS), dimerization of Ty3 RNA and initiation of reverse transcription. This chain is Transposon Ty3-G Gag polyprotein (TY3A-G), found in Saccharomyces cerevisiae (strain ATCC 204508 / S288c) (Baker's yeast).